Here is a 526-residue protein sequence, read N- to C-terminus: Glucose-6-phosphate isomerase (526 aa).

Glutamate 323 acts as the Proton donor in catalysis. Residues histidine 352 and lysine 454 contribute to the active site.

Belongs to the GPI family.

The protein resides in the cytoplasm. It catalyses the reaction alpha-D-glucose 6-phosphate = beta-D-fructose 6-phosphate. Its pathway is carbohydrate biosynthesis; gluconeogenesis. The protein operates within carbohydrate degradation; glycolysis; D-glyceraldehyde 3-phosphate and glycerone phosphate from D-glucose: step 2/4. In terms of biological role, catalyzes the reversible isomerization of glucose-6-phosphate to fructose-6-phosphate. The protein is Glucose-6-phosphate isomerase of Prochlorococcus marinus subsp. pastoris (strain CCMP1986 / NIES-2087 / MED4).